The sequence spans 427 residues: Carboxyl-terminal-processing protease (427 aa).

An N-terminal signal peptide occupies residues 1–31 (MGKRTRRFWALAFSLLMGALIYLGNTPSALA). The 83-residue stretch at 104 to 186 (NLQVTTTGEL…TKVSLEILSA (83 aa)) folds into the PDZ domain. Catalysis depends on charge relay system residues S313, D324, and K338.

The protein belongs to the peptidase S41A family.

The protein resides in the cellular thylakoid lumen. The catalysed reaction is The enzyme shows specific recognition of a C-terminal tripeptide, Xaa-Yaa-Zaa, in which Xaa is preferably Ala or Leu, Yaa is preferably Ala or Tyr, and Zaa is preferably Ala, but then cleaves at a variable distance from the C-terminus. A typical cleavage is -Ala-Ala-|-Arg-Ala-Ala-Lys-Glu-Asn-Tyr-Ala-Leu-Ala-Ala.. Cleavage of the 16 C-terminal residues from the D1 precursor of photosystem II (PSII). This proteolytic processing is necessary to allow the light-driven assembly of the oxygen-evolving cluster (a tetranuclear manganese), which is responsible for photosynthetic water oxidation. The polypeptide is Carboxyl-terminal-processing protease (ctpA) (Synechocystis sp. (strain ATCC 27184 / PCC 6803 / Kazusa)).